The primary structure comprises 899 residues: Valine--tRNA ligase (899 aa).

The 'HIGH' region signature appears at 58-68; that stretch reads PNVTGVLHIGH. A 'KMSKS' region motif is present at residues 544-548; the sequence is KMSKS. An ATP-binding site is contributed by K547. Positions 836–898 form a coiled coil; that stretch reads GTRLHNQRQK…NAELIALGLQ (63 aa).

This sequence belongs to the class-I aminoacyl-tRNA synthetase family. ValS type 1 subfamily. Monomer.

It is found in the cytoplasm. It carries out the reaction tRNA(Val) + L-valine + ATP = L-valyl-tRNA(Val) + AMP + diphosphate. Its function is as follows. Catalyzes the attachment of valine to tRNA(Val). As ValRS can inadvertently accommodate and process structurally similar amino acids such as threonine, to avoid such errors, it has a 'posttransfer' editing activity that hydrolyzes mischarged Thr-tRNA(Val) in a tRNA-dependent manner. The chain is Valine--tRNA ligase from Helicobacter hepaticus (strain ATCC 51449 / 3B1).